The chain runs to 494 residues: ETS translocation variant 4 (494 aa).

Disordered regions lie at residues Glu-82–Gln-113 and Ala-139–Ala-201. Polar residues predominate over residues Ser-100 to Gln-113. A compositionally biased stretch (low complexity) spans Ser-176 to Ser-187. Residues Tyr-188–Pro-197 show a composition bias toward polar residues. The segment at residues Leu-350 to Val-430 is a DNA-binding region (ETS).

This sequence belongs to the ETS family. Phosphorylated. As to expression, in the embryo, expressed ubiquitously until the late blastula stage, in the marginal zone of gastrula stages, in the presumptive forebrain and hindbrain and in the trunk region of early somite stages. In later stages, also expressed in Rohon-Beard neurons, epiphysis, lateral line placodes, pectoral fin buds, developing lens and heart.

It is found in the nucleus. Transcriptional activator that binds to the (5'-CCGGA[AT]-3') motif. May control the acquisition of specific cell fates at an early stage during development of the somites and nervous system. May mediate the cellular effects of the fibroblast growth factors on embryogenesis. The sequence is that of ETS translocation variant 4 (etv4) from Danio rerio (Zebrafish).